Reading from the N-terminus, the 243-residue chain is Cell division protein ZipA (243 aa).

Topologically, residues 1–4 (MSDV) are periplasmic. A helical membrane pass occupies residues 5 to 25 (TLLRIGIAIVGILFVAAVFFF). At 26–243 (STPKTSAHRV…VPPLIKNSRW (218 aa)) the chain is on the cytoplasmic side. The tract at residues 32–89 (AHRVRTKKEEPPRERREPMLSTEADNSPPQGVDEVPASVSQQQVNPEANKPGEVQLGK) is disordered. The segment covering 38 to 49 (KKEEPPRERREP) has biased composition (basic and acidic residues).

Belongs to the ZipA family. Interacts with FtsZ via their C-terminal domains.

It is found in the cell inner membrane. Functionally, essential cell division protein that stabilizes the FtsZ protofilaments by cross-linking them and that serves as a cytoplasmic membrane anchor for the Z ring. Also required for the recruitment to the septal ring of downstream cell division proteins. The sequence is that of Cell division protein ZipA from Xylella fastidiosa (strain 9a5c).